A 477-amino-acid polypeptide reads, in one-letter code: RTX-III toxin determinant D (477 aa).

Topologically, residues Met1–Leu59 are cytoplasmic. A helical transmembrane segment spans residues Ile60–Ile77. The Periplasmic portion of the chain corresponds to Ser78–Arg477.

The protein belongs to the membrane fusion protein (MFP) (TC 8.A.1) family.

The protein resides in the cell inner membrane. In terms of biological role, involved in the transport of the toxin RTX-III. This is RTX-III toxin determinant D (apxIIID) from Actinobacillus pleuropneumoniae (Haemophilus pleuropneumoniae).